Consider the following 273-residue polypeptide: Dermonecrotic toxin LdSicTox-alphaIB3av (273 aa).

Histidine 5 is an active-site residue. Residues glutamate 25 and aspartate 27 each coordinate Mg(2+). The active-site Nucleophile is the histidine 41. Disulfide bonds link cysteine 45–cysteine 51 and cysteine 47–cysteine 190. Aspartate 85 provides a ligand contact to Mg(2+).

The protein belongs to the arthropod phospholipase D family. Class II subfamily. Mg(2+) is required as a cofactor. Expressed by the venom gland.

It is found in the secreted. It carries out the reaction an N-(acyl)-sphingosylphosphocholine = an N-(acyl)-sphingosyl-1,3-cyclic phosphate + choline. It catalyses the reaction an N-(acyl)-sphingosylphosphoethanolamine = an N-(acyl)-sphingosyl-1,3-cyclic phosphate + ethanolamine. The catalysed reaction is a 1-acyl-sn-glycero-3-phosphocholine = a 1-acyl-sn-glycero-2,3-cyclic phosphate + choline. The enzyme catalyses a 1-acyl-sn-glycero-3-phosphoethanolamine = a 1-acyl-sn-glycero-2,3-cyclic phosphate + ethanolamine. Dermonecrotic toxins cleave the phosphodiester linkage between the phosphate and headgroup of certain phospholipids (sphingolipid and lysolipid substrates), forming an alcohol (often choline) and a cyclic phosphate. This toxin acts on sphingomyelin (SM). It may also act on ceramide phosphoethanolamine (CPE), lysophosphatidylcholine (LPC) and lysophosphatidylethanolamine (LPE), but not on lysophosphatidylserine (LPS), and lysophosphatidylglycerol (LPG). It acts by transphosphatidylation, releasing exclusively cyclic phosphate products as second products. Induces dermonecrosis, hemolysis, increased vascular permeability, edema, inflammatory response, and platelet aggregation. This is Dermonecrotic toxin LdSicTox-alphaIB3av from Loxosceles deserta (Desert recluse spider).